An 802-amino-acid chain; its full sequence is Leucine--tRNA ligase (802 aa).

A 'HIGH' region motif is present at residues 40–51; sequence PYPSGAGLHVGH. The 'KMSKS' region motif lies at 576–580; it reads KMSKS. Residue K579 participates in ATP binding.

Belongs to the class-I aminoacyl-tRNA synthetase family.

Its subcellular location is the cytoplasm. The catalysed reaction is tRNA(Leu) + L-leucine + ATP = L-leucyl-tRNA(Leu) + AMP + diphosphate. The polypeptide is Leucine--tRNA ligase (Bacillus cytotoxicus (strain DSM 22905 / CIP 110041 / 391-98 / NVH 391-98)).